The following is a 163-amino-acid chain: Transcriptional repressor NrdR (163 aa).

A zinc finger spans residues 3 to 34; it reads CPFCAHPEDKVVDSRESKEGESIRRRRECLKC. The ATP-cone domain occupies 49-139; sequence YMVVKKDGRR…VYLDFKDVRE (91 aa).

Belongs to the NrdR family. Zn(2+) is required as a cofactor.

Functionally, negatively regulates transcription of bacterial ribonucleotide reductase nrd genes and operons by binding to NrdR-boxes. This chain is Transcriptional repressor NrdR, found in Koribacter versatilis (strain Ellin345).